The primary structure comprises 801 residues: MEFSHKAIEKKWKKYWEENNTNKTTNTSDKKSYVLDMFPYPSGAGIHVGHVKGYTATDVFSRYKRMNGYDVLHPMGWDAFGLPAEQYALKTGNDPIDFTLENIKTFKRQLKMMGFSYDFDKEISTANPNYYKITQWIFNQLYKKGLAENRDVEVNWCQELGTVLANDEIIEKDGLMVSERGEHPVTKRKMRQWVLKITEYADRLLEGLDELEWNSSIKDLQRNWIGKSTGVELDFLVNNIKVPVFTTRIDTIYGVSYIVLAPEHEQVLNITTPEQLKEVQTYIELAKNKSEIDRKDESKPKTGVFTGSYATNPHTNELVQVWVSDYVLANYGTGAVMAVPAHDKRDWEFATKFNLEKKFVIENKTDEKAFVGEGKIINSDILNGMDKKQAIQTMTKIAIEQGWGREQTNYKLRDWLFSRQRFYGEPFPVLYGPNQEITLIEDLPVELPRIKNIKPSGTGESPLANVEEWVNVEIDGVKYRRETNTMPQSAGSSWYYLAYILADGENEFIDIDSAEAKKRFEKWMPVDLYVGGQEHAVGHLLYARFWNYVLYDLGITSVKEPFKQLFNQGMILGPDGRKMSKSWGNVINPDDIVSTHGADSLRLYEMFMGPLDASLPWSEDGLDSALKWIHRAYRMVMTTELTDVNDTKLDFVYNDVVKNVSEMIESLKFNTAISQLMIFVNAVYKHEGPVYRPYIEGFVKMLSIYAPFIGEELWEKLGHAPSITKQAWPVFDPSKLVSNTVVIALQINGKLRATIEVEKGTIKDKLLELAKKQESIISYIKDKEIIKEIAVVDRIVNIVIK.

The short motif at 39-50 (PYPSGAGIHVGH) is the 'HIGH' region element. The 'KMSKS' region signature appears at 578–582 (KMSKS). Lys-581 lines the ATP pocket.

It belongs to the class-I aminoacyl-tRNA synthetase family.

It localises to the cytoplasm. The catalysed reaction is tRNA(Leu) + L-leucine + ATP = L-leucyl-tRNA(Leu) + AMP + diphosphate. The polypeptide is Leucine--tRNA ligase (Mesoplasma florum (strain ATCC 33453 / NBRC 100688 / NCTC 11704 / L1) (Acholeplasma florum)).